The chain runs to 320 residues: Short-chain dehydrogenase TIC 32 B, chloroplastic (320 aa).

Residues 40-46 (GGTSGIG), 92-93 (DL), asparagine 119, and threonine 140 contribute to the NADP(+) site. Position 174 (serine 174) interacts with substrate. The active-site Proton acceptor is the tyrosine 196. The tract at residues 301 to 317 (DTTLADKLWDFSIKLVD) is interaction with calmodulin.

It belongs to the short-chain dehydrogenases/reductases (SDR) family. Part of the Tic complex.

The protein localises to the plastid. It is found in the chloroplast inner membrane. Functionally, involved in protein precursor import into chloroplasts. This Brassica napus (Rape) protein is Short-chain dehydrogenase TIC 32 B, chloroplastic.